A 723-amino-acid polypeptide reads, in one-letter code: CSC1-like protein ERD4 (723 aa).

Topologically, residues 1–5 (MEFAS) are cytoplasmic. The chain crosses the membrane as a helical span at residues 6–26 (FLVSLGTSAIIFVVLMFLFTW). Topologically, residues 27–90 (LSRRPGNVPV…TAVYFVFQST (64 aa)) are extracellular. A helical membrane pass occupies residues 91–111 (VLGIFALSALLLLPTLLPIAA). The Cytoplasmic segment spans residues 112 to 148 (TDNNLETSRSATDTTSNGTFSQLDNLSMANITKSSSR). A helical membrane pass occupies residues 149 to 169 (LWAFLGAVYWVSVVTYFMLWK). The Extracellular segment spans residues 170 to 364 (AYKHVAALRA…IKFFSRIVRQ (195 aa)). Residues 365-385 (YVIYFLVAITILFYMIPIAFV) traverse the membrane as a helical segment. The Cytoplasmic segment spans residues 386–416 (SAITTLANLQKALPFLKPIVDIAFIRTILES). Residues 417 to 437 (YLPQIALIVFLAMLPKFLMFL) form a helical membrane-spanning segment. Residues 438–456 (SKSEGIPSQSHAIRATSGK) are Extracellular-facing. The helical transmembrane segment at 457–477 (YFYFSVLNVFIGVTLAGSLFE) threads the bilayer. Over 478–508 (NLKALEEKPNSFITLLATSLPKSATFFLTYV) the chain is Cytoplasmic. The chain crosses the membrane as a helical span at residues 509 to 529 (ALKFFVGYGLELSRIIPLIIF). At 530-572 (HLKKKYLCKTEAEVKEAWYPGDLSYATRVPSDMLILTITFCYS) the chain is on the extracellular side. A helical transmembrane segment spans residues 573–593 (VIAPLILVFGVIYFGLGWLIL). At 594–614 (RNQALKVYVPSYESYGRMWPH) the chain is on the cytoplasmic side. The chain crosses the membrane as a helical span at residues 615 to 635 (IHTRILAALFLFQLVMFGYLG). Topologically, residues 636-637 (VK) are extracellular. A helical transmembrane segment spans residues 638–658 (IFVWAILLVPLIFISLIFGYV). Over 659–723 (CRQKFYGGFE…YQDYAAISAA (65 aa)) the chain is Cytoplasmic.

The protein belongs to the CSC1 (TC 1.A.17) family.

Its subcellular location is the plastid. The protein localises to the chloroplast membrane. Acts as an osmosensitive calcium-permeable cation channel. In Brassica juncea (Indian mustard), this protein is CSC1-like protein ERD4 (ERD4).